A 260-amino-acid polypeptide reads, in one-letter code: Pyridoxine 5'-phosphate synthase (260 aa).

Positions 10 and 21 each coordinate 3-amino-2-oxopropyl phosphate. The active-site Proton acceptor is the His-46. 2 residues coordinate 1-deoxy-D-xylulose 5-phosphate: Arg-48 and His-53. Glu-76 (proton acceptor) is an active-site residue. A 1-deoxy-D-xylulose 5-phosphate-binding site is contributed by Thr-113. Residue His-204 is the Proton donor of the active site. 3-amino-2-oxopropyl phosphate is bound by residues Asp-205 and 227–228 (GH).

This sequence belongs to the PNP synthase family. As to quaternary structure, homooctamer; tetramer of dimers.

Its subcellular location is the cytoplasm. The catalysed reaction is 3-amino-2-oxopropyl phosphate + 1-deoxy-D-xylulose 5-phosphate = pyridoxine 5'-phosphate + phosphate + 2 H2O + H(+). It functions in the pathway cofactor biosynthesis; pyridoxine 5'-phosphate biosynthesis; pyridoxine 5'-phosphate from D-erythrose 4-phosphate: step 5/5. Catalyzes the complicated ring closure reaction between the two acyclic compounds 1-deoxy-D-xylulose-5-phosphate (DXP) and 3-amino-2-oxopropyl phosphate (1-amino-acetone-3-phosphate or AAP) to form pyridoxine 5'-phosphate (PNP) and inorganic phosphate. The polypeptide is Pyridoxine 5'-phosphate synthase (Xylella fastidiosa (strain M12)).